A 713-amino-acid polypeptide reads, in one-letter code: Denticleless protein homolog (713 aa).

3 WD repeats span residues 47 to 89 (GAAV…VQRL), 96 to 135 (AHTN…LIGE), and 138 to 178 (GHQC…KDGF). The short motif at 168–171 (WDTR) is the DDB1-binding motif element. A Nuclear localization signal motif is present at residues 197–204 (PSKVKKRK). 4 WD repeats span residues 215–254 (DSQQ…SAYR), 270–309 (TRKL…TEPV), 314–355 (GHQN…VPPV), and 359–399 (GHCQ…EDSA). Residues 244 to 247 (WDLR) carry the DDB1-binding motif motif. Disordered regions lie at residues 474-544 (TPQR…EKRA), 604-623 (GFDQ…NGTV), and 635-700 (SDLR…TPGS). 2 stretches are compositionally biased toward polar residues: residues 504–516 (TPKS…TKTP) and 612–623 (GPSTSFLINGTV). Positions 635–644 (SDLRDKENSS) are enriched in basic and acidic residues. The span at 686–699 (NAPNSPVSVPTTPG) shows a compositional bias: polar residues.

The protein belongs to the WD repeat cdt2 family. Component of the DCX(DTL) E3 ubiquitin ligase complex, at least composed of cul4 (cul4a or cul4b), ddb1, dtl/cdt2 and rbx1.

Its subcellular location is the nucleus. It is found in the cytoplasm. The protein localises to the cytoskeleton. The protein resides in the microtubule organizing center. It localises to the centrosome. Its subcellular location is the chromosome. It participates in protein modification; protein ubiquitination. In terms of biological role, substrate-specific adapter of a DCX (DDB1-CUL4-X-box) E3 ubiquitin-protein ligase complex required for cell cycle control, DNA damage response and translesion DNA synthesis. The DCX(DTL) complex, also named CRL4(CDT2) complex, mediates the polyubiquitination and subsequent degradation of CDT1, CDKN1A/p21(CIP1), KMT5A and SDE2. CDT1 degradation in response to DNA damage is necessary to ensure proper cell cycle regulation of DNA replication. CDKN1A/p21(CIP1) degradation during S phase or following UV irradiation is essential to control replication licensing. KMT5A degradation is also important for a proper regulation of mechanisms such as TGF-beta signaling, cell cycle progression, DNA repair and cell migration. Most substrates require their interaction with PCNA for their polyubiquitination: substrates interact with PCNA via their PIP-box, and those containing the 'K+4' motif in the PIP box, recruit the DCX(DTL) complex, leading to their degradation. In undamaged proliferating cells, the DCX(DTL) complex also promotes the 'Lys-164' monoubiquitination of PCNA, thereby being involved in PCNA-dependent translesion DNA synthesis. May play a role in the regulation of the circadian clock. The polypeptide is Denticleless protein homolog (dtl) (Xenopus tropicalis (Western clawed frog)).